A 90-amino-acid polypeptide reads, in one-letter code: MRDPVSSQYSSFLFWRMPIPELDLSELEGLGLSDTATYKVKDSSVGKMIGQATAADQEKNPEGDGLLEYSTFNFWRAPIASIHSFELDLL.

The short motif at 24-32 (LSELEGLGL) is the Nuclear export signal element. A Phosphoserine modification is found at Ser84.

The protein belongs to the MLLT11 family. As to quaternary structure, interacts with HSPA8 and LAMP2 isoform A; the interaction may target MLLT11 for degradation via chaperone-mediated autophagy. Interacts with TCF7. Ubiquitinated, leading to degradation. In terms of tissue distribution, expressed in myoepithelial cells of normal breast tissue (at protein level). Highly expressed in thymus. Expressed in colon, small intestine, prostate and ovary. Not detected in peripheral blood lymphocytes and spleen.

The protein localises to the nucleus. The protein resides in the cytoplasm. It localises to the cytoskeleton. It is found in the microtubule organizing center. Its subcellular location is the centrosome. Cofactor for the transcription factor TCF7. Involved in regulation of lymphoid development by driving multipotent hematopoietic progenitor cells towards a T cell fate. This chain is Protein AF1q (MLLT11), found in Homo sapiens (Human).